We begin with the raw amino-acid sequence, 298 residues long: Movement protein BC1 (298 aa).

The tract at residues 253–273 (LPEASLDPGDSVSQTQSMTKK) is disordered.

This sequence belongs to the begomovirus movement protein BC1 family. As to quaternary structure, binds to dimeric supercoiled plasmid DNA. In terms of processing, phosphorylated.

It is found in the host cell membrane. Its subcellular location is the host microsome membrane. The protein localises to the host endoplasmic reticulum membrane. In terms of biological role, transports viral genome to neighboring plant cells directly through plasmosdesmata, without any budding. The movement protein allows efficient cell to cell propagation, by bypassing the host cell wall barrier. Begomovirus genome is shuttled out of nucleus by Nuclear shuttle protein (NSP) and the movement protein transports the DNA-NSP complex to cell plasmodesmata and facilitates further movement across the cell wall. The chain is Movement protein BC1 from Hewittia sublobata (Coralbush).